The sequence spans 443 residues: 23S rRNA (uracil(1939)-C(5))-methyltransferase RlmD (443 aa).

Residues 4–66 form the TRAM domain; the sequence is QNRFDRTSFQ…RHFDEARVVE (63 aa). Positions 79, 85, 88, and 167 each coordinate [4Fe-4S] cluster. S-adenosyl-L-methionine-binding residues include Q275, F304, N309, E325, D352, and D373. Residue C399 is the Nucleophile of the active site.

The protein belongs to the class I-like SAM-binding methyltransferase superfamily. RNA M5U methyltransferase family. RlmD subfamily.

The catalysed reaction is uridine(1939) in 23S rRNA + S-adenosyl-L-methionine = 5-methyluridine(1939) in 23S rRNA + S-adenosyl-L-homocysteine + H(+). Its function is as follows. Catalyzes the formation of 5-methyl-uridine at position 1939 (m5U1939) in 23S rRNA. This is 23S rRNA (uracil(1939)-C(5))-methyltransferase RlmD from Xylella fastidiosa (strain 9a5c).